The primary structure comprises 194 residues: Peptidyl-tRNA hydrolase (194 aa).

Tyr17 is a tRNA binding site. The active-site Proton acceptor is the His22. 3 residues coordinate tRNA: Tyr68, Asn70, and Asn116.

Belongs to the PTH family. In terms of assembly, monomer.

It is found in the cytoplasm. The enzyme catalyses an N-acyl-L-alpha-aminoacyl-tRNA + H2O = an N-acyl-L-amino acid + a tRNA + H(+). Its function is as follows. Hydrolyzes ribosome-free peptidyl-tRNAs (with 1 or more amino acids incorporated), which drop off the ribosome during protein synthesis, or as a result of ribosome stalling. Catalyzes the release of premature peptidyl moieties from peptidyl-tRNA molecules trapped in stalled 50S ribosomal subunits, and thus maintains levels of free tRNAs and 50S ribosomes. The polypeptide is Peptidyl-tRNA hydrolase (Pseudomonas aeruginosa (strain LESB58)).